Consider the following 119-residue polypeptide: Small polypeptide DEVIL 24 (119 aa).

Positions 83–114 (SFTSKCTSLMKQQHARLCIIRLCATMLLRSYT) are required for DVL/RTFL small polypeptide activity. A helical transmembrane segment spans residues 96-113 (HARLCIIRLCATMLLRSY).

It belongs to the DVL/RTFL small polypeptides family.

Its subcellular location is the cell membrane. Its function is as follows. Small polypeptide acting as a regulatory molecule which coordinates cellular responses required for differentiation, growth and development, probably by restricting polar cell proliferation in lateral organs and coordinating socket cell recruitment and differentiation at trichome sites. This chain is Small polypeptide DEVIL 24, found in Arabidopsis thaliana (Mouse-ear cress).